Reading from the N-terminus, the 429-residue chain is Histidinol dehydrogenase (429 aa).

Positions 130, 191, and 214 each coordinate NAD(+). The substrate site is built by S237, Q259, and H262. The Zn(2+) site is built by Q259 and H262. Catalysis depends on proton acceptor residues E327 and H328. Positions 328, 361, 415, and 420 each coordinate substrate. D361 provides a ligand contact to Zn(2+). H420 is a binding site for Zn(2+).

Belongs to the histidinol dehydrogenase family. Zn(2+) serves as cofactor.

It catalyses the reaction L-histidinol + 2 NAD(+) + H2O = L-histidine + 2 NADH + 3 H(+). It functions in the pathway amino-acid biosynthesis; L-histidine biosynthesis; L-histidine from 5-phospho-alpha-D-ribose 1-diphosphate: step 9/9. Its function is as follows. Catalyzes the sequential NAD-dependent oxidations of L-histidinol to L-histidinaldehyde and then to L-histidine. The sequence is that of Histidinol dehydrogenase from Neisseria gonorrhoeae (strain ATCC 700825 / FA 1090).